A 102-amino-acid chain; its full sequence is NADH-quinone oxidoreductase subunit K (102 aa).

A run of 3 helical transmembrane segments spans residues 6 to 26, 30 to 50, and 65 to 85; these read MEHG…GLLI, LLFI…AFVV, and ILVI…LLLL.

Belongs to the complex I subunit 4L family. In terms of assembly, NDH-1 is composed of 14 different subunits. Subunits NuoA, H, J, K, L, M, N constitute the membrane sector of the complex.

It localises to the cell inner membrane. The catalysed reaction is a quinone + NADH + 5 H(+)(in) = a quinol + NAD(+) + 4 H(+)(out). In terms of biological role, NDH-1 shuttles electrons from NADH, via FMN and iron-sulfur (Fe-S) centers, to quinones in the respiratory chain. The immediate electron acceptor for the enzyme in this species is believed to be ubiquinone. Couples the redox reaction to proton translocation (for every two electrons transferred, four hydrogen ions are translocated across the cytoplasmic membrane), and thus conserves the redox energy in a proton gradient. This Aeromonas salmonicida (strain A449) protein is NADH-quinone oxidoreductase subunit K.